Here is a 117-residue protein sequence, read N- to C-terminus: Large ribosomal subunit protein uL18 (117 aa).

Belongs to the universal ribosomal protein uL18 family. In terms of assembly, part of the 50S ribosomal subunit; part of the 5S rRNA/L5/L18/L25 subcomplex. Contacts the 5S and 23S rRNAs.

Its function is as follows. This is one of the proteins that bind and probably mediate the attachment of the 5S RNA into the large ribosomal subunit, where it forms part of the central protuberance. This chain is Large ribosomal subunit protein uL18, found in Histophilus somni (strain 129Pt) (Haemophilus somnus).